Consider the following 533-residue polypeptide: Spindle pole body protein CSA6 (533 aa).

Disordered stretches follow at residues 1–32 and 53–130; these read MEDSTEDIIKSFTLEQSPEIKPKPKSKTSDLT and DKYD…QEDE. Composition is skewed to basic and acidic residues over residues 18–30 and 53–68; these read PEIKPKPKSKTSD and DKYDQNVSDSEHDLTP. Residues 83–94 are compositionally biased toward low complexity; it reads PSKFSSSIPQKP. Positions 103-121 are enriched in polar residues; the sequence is SSPTKNYTDHINQLRSGPN. The stretch at 136 to 236 forms a coiled coil; it reads KYEIKRLKQE…RSERDELVKD (101 aa). Residues 309-318 are compositionally biased toward basic and acidic residues; it reads EKDKPSEDKT. Disordered stretches follow at residues 309 to 329 and 349 to 453; these read EKDKPSEDKTSSPNFDSSKDA and SANS…QSTK. 2 stretches are compositionally biased toward polar residues: residues 349-392 and 405-421; these read SANS…SNSQ and IYSSSTPNTNGYNQSSH. Residues 432 to 445 show a composition bias toward basic and acidic residues; it reads PRVERDHWTDRPPS.

The protein resides in the cytoplasm. Its subcellular location is the cytoskeleton. It localises to the microtubule organizing center. It is found in the spindle pole body. Its function is as follows. Plays a role in mitotic spindle pole body organization, possibly at the point of spindle pole body separation. Required for mitotic exit. This chain is Spindle pole body protein CSA6, found in Candida dubliniensis (strain CD36 / ATCC MYA-646 / CBS 7987 / NCPF 3949 / NRRL Y-17841) (Yeast).